A 386-amino-acid chain; its full sequence is Protein RETICULATA-RELATED 4, chloroplastic (386 aa).

A chloroplast-targeting transit peptide spans 1–61 (MAIASCFFCV…RRVPITPVLS (61 aa)). The disordered stretch occupies residues 61–99 (SASSGNGGSDNNGGGLSGGGGGGDGGKNDGDGHGDEDRD). Gly residues predominate over residues 65–85 (GNGGSDNNGGGLSGGGGGGDG). Basic and acidic residues predominate over residues 86 to 99 (GKNDGDGHGDEDRD). 2 helical membrane-spanning segments follow: residues 201–221 (VVFADVAMAIIADFMLVYLPA) and 273–293 (KLFAVGTTSSLVGTAITNAFI).

Belongs to the RETICULATA family.

The protein resides in the plastid. The protein localises to the chloroplast membrane. May play a role in leaf development. The sequence is that of Protein RETICULATA-RELATED 4, chloroplastic from Arabidopsis thaliana (Mouse-ear cress).